The primary structure comprises 254 residues: uncharacterized protein (254 aa).

NADP(+) contacts are provided by isoleucine 18, serine 37, aspartate 63, asparagine 90, tyrosine 159, lysine 163, valine 192, and threonine 194. Tyrosine 159 functions as the Proton donor in the catalytic mechanism. The active-site Lowers pKa of active site Tyr is the lysine 163.

Belongs to the short-chain dehydrogenases/reductases (SDR) family.

It localises to the cytoplasm. Its subcellular location is the nucleus. This is an uncharacterized protein from Schizosaccharomyces pombe (strain 972 / ATCC 24843) (Fission yeast).